Here is an 817-residue protein sequence, read N- to C-terminus: Rho GTPase-activating protein gacII (817 aa).

A Rho-GAP domain is found at 20 to 204; it reads TTIVKIGTPK…TLIEEFQYIS (185 aa). In terms of domain architecture, SH3 spans 238–298; it reads EDYLIAKANT…SQTYVDIIDI (61 aa). Low complexity predominate over residues 318-339; sequence ASTILHTPPTSSSSSSSSSSSS. Disordered regions lie at residues 318–638, 691–771, and 783–817; these read ASTI…NIPV, LGGQ…QQQQ, and LPPQNTNLSGKNLQRSSTSMLLNKLPPPPFSFNKN. Polar residues predominate over residues 340 to 358; the sequence is ILLTDNQPKLCSSTPRINN. The segment covering 359–391 has biased composition (low complexity); the sequence is SPSSFSPSLSSTTPQLLVQQSPRQSPRQIPSIS. Residues 396 to 438 show a composition bias toward polar residues; it reads PNNTNQPSFGHGTLQRTSTGYFSSKPLSISQPINMSKPTNMSP. The segment covering 461–471 has biased composition (pro residues); sequence PPLPTKPPPLT. The segment covering 472-498 has biased composition (low complexity); it reads IPSSSSLPTTPIKQQPQQPIQQPLTPQ. The segment covering 509–532 has biased composition (polar residues); it reads LSSSVNTANTGNCANILSPNSDRY. Composition is skewed to low complexity over residues 534-568, 577-587, and 607-624; these read SSRSQSSVHLSGSSSSSSSSSSSSSSSSSSSSSTS, KSKSSKNSPSK, and ITTTTTTTTTTTTTTIAT. A compositionally biased stretch (pro residues) spans 625–635; sequence TPPPPSKPLPN. Residues 705–722 are compositionally biased toward polar residues; that stretch reads KSQSSYLDNNNLPSRNTN. The span at 725 to 734 shows a compositional bias: pro residues; that stretch reads NLPPRPPPLN. 2 stretches are compositionally biased toward low complexity: residues 735-744 and 752-771; these read IPQQQQQYKP and QSPQSSLNQSLQIPLQQQQQ. The segment covering 785–803 has biased composition (polar residues); the sequence is PQNTNLSGKNLQRSSTSML. Over residues 807–817 the composition is skewed to pro residues; sequence LPPPPFSFNKN.

The protein localises to the cytoplasm. Its function is as follows. Rho GTPase-activating protein involved in the signal transduction pathway. The polypeptide is Rho GTPase-activating protein gacII (gacII) (Dictyostelium discoideum (Social amoeba)).